A 65-amino-acid chain; its full sequence is Small ribosomal subunit protein bS21 (65 aa).

Belongs to the bacterial ribosomal protein bS21 family.

In Chlorobaculum parvum (strain DSM 263 / NCIMB 8327) (Chlorobium vibrioforme subsp. thiosulfatophilum), this protein is Small ribosomal subunit protein bS21.